We begin with the raw amino-acid sequence, 431 residues long: Glucose-1-phosphate adenylyltransferase (431 aa).

Lysine 39 is a beta-D-fructose 1,6-bisphosphate binding site. Residues arginine 40, histidine 46, and arginine 52 each contribute to the AMP site. Alpha-D-glucose 1-phosphate is bound at residue tyrosine 114. Arginine 130 contributes to the AMP binding site. Alpha-D-glucose 1-phosphate-binding positions include glycine 179, 194–195 (EK), and serine 212. AMP is bound by residues glutamate 370 and arginine 386. Beta-D-fructose 1,6-bisphosphate contacts are provided by residues 419-423 (REMLR) and 429-431 (QER).

Belongs to the bacterial/plant glucose-1-phosphate adenylyltransferase family. In terms of assembly, homotetramer.

It catalyses the reaction alpha-D-glucose 1-phosphate + ATP + H(+) = ADP-alpha-D-glucose + diphosphate. The protein operates within glycan biosynthesis; glycogen biosynthesis. Its activity is regulated as follows. Allosterically activated by fructose-1,6-bisphosphate (F16BP) and inhibited by AMP. Functionally, involved in the biosynthesis of ADP-glucose, a building block required for the elongation reactions to produce glycogen. Catalyzes the reaction between ATP and alpha-D-glucose 1-phosphate (G1P) to produce pyrophosphate and ADP-Glc. This is Glucose-1-phosphate adenylyltransferase from Escherichia coli O127:H6 (strain E2348/69 / EPEC).